A 439-amino-acid polypeptide reads, in one-letter code: Glycosyl hydrolase DigH (439 aa).

The first 27 residues, 1–27, serve as a signal peptide directing secretion; sequence MDICSRNEKLAIRRPAILVALALLLCS. Cysteine 28 is lipidated: N-palmitoyl cysteine. Cysteine 28 is lipidated: S-diacylglycerol cysteine. The disordered stretch occupies residues 34 to 54; the sequence is ESMVTPPAGSKPPATTQQSSQ.

Belongs to the glycosyl hydrolase-like 10 (GHL10) family.

The protein localises to the cell outer membrane. Divisome-localized glycosyl hydrolase that cleaves peptide-free (denuded) peptidoglycans. The chain is Glycosyl hydrolase DigH from Escherichia coli O6:H1 (strain CFT073 / ATCC 700928 / UPEC).